The primary structure comprises 216 residues: Ceramide-1-phosphate transfer protein (216 aa).

Positions 56, 60, 108, 112, and 152 each coordinate an N-acylsphingoid base 1-phosphate.

This sequence belongs to the GLTP family.

It localises to the cytoplasm. The protein localises to the cytosol. It is found in the golgi apparatus. Its subcellular location is the trans-Golgi network membrane. The protein resides in the cell membrane. It localises to the endosome membrane. The protein localises to the nucleus outer membrane. It catalyses the reaction N-(hexadecanoyl)-sphing-4-enine-1-phosphate(in) = N-(hexadecanoyl)-sphing-4-enine-1-phosphate(out). It carries out the reaction N-(9Z-octadecenoyl)-sphing-4-enine-1-phosphate(in) = N-(9Z-octadecenoyl)-sphing-4-enine-1-phosphate(out). Mediates the intracellular transfer of ceramide-1-phosphate (C1P) between organelle membranes and the cell membrane. Required for normal structure of the Golgi stacks. Can bind phosphoceramides with a variety of aliphatic chains, but has a preference for lipids with saturated C16:0 or monounsaturated C18:1 aliphatic chains, and is inefficient with phosphoceramides containing lignoceryl (C24:0). Plays a role in the regulation of the cellular levels of ceramide-1-phosphate, and thereby contributes to the regulation of phospholipase PLA2G4A activity and the release of arachidonic acid. Has no activity with galactosylceramide, lactosylceramide, sphingomyelin, phosphatidylcholine, phosphatidic acid and ceramide. C1P transfer is stimulated by phosphatidylserine in C1P source vesicles. Regulates autophagy, inflammasome mediated IL1B and IL18 processing, and pyroptosis, but not apoptosis. This chain is Ceramide-1-phosphate transfer protein, found in Mus musculus (Mouse).